A 155-amino-acid chain; its full sequence is Large ribosomal subunit protein uL13 (155 aa).

The protein belongs to the universal ribosomal protein uL13 family. As to quaternary structure, part of the 50S ribosomal subunit.

Its function is as follows. This protein is one of the early assembly proteins of the 50S ribosomal subunit, although it is not seen to bind rRNA by itself. It is important during the early stages of 50S assembly. This is Large ribosomal subunit protein uL13 from Rickettsia akari (strain Hartford).